Reading from the N-terminus, the 280-residue chain is Alpha-methyl-mannoside-specific lectin (280 aa).

An N-terminal signal peptide occupies residues M1–S26. A carbohydrate contacts are provided by D114 and G134. Residues E156 and D158 each coordinate Mn(2+). Ca(2+)-binding residues include D158 and F160. A carbohydrate is bound by residues S165 and N166. Ca(2+)-binding residues include N166 and D169. Mn(2+) contacts are provided by D169 and H174. A carbohydrate-binding residues include G248 and Q250.

The protein belongs to the leguminous lectin family. In terms of assembly, homodimer. In terms of processing, glycosylated.

Alpha-methyl-D-mannoside-specific lectin. Has hemagglutinating activity towards rabbit erythrocytes. Binds to cytokinins and significantly inhibits physiological effects of cytokinin activity such as cotyledon expansion and delayed leaf senescence. In Arachis hypogaea (Peanut), this protein is Alpha-methyl-mannoside-specific lectin.